A 1224-amino-acid chain; its full sequence is Potassium channel subfamily T member 1 (1224 aa).

The tract at residues 1-37 (MARAKLPRSPSEGKAGPGDTPAGAAAPEEPHGLSPLL) is disordered. Over 1–79 (MARAKLPRSP…LFFIKNQRSS (79 aa)) the chain is Cytoplasmic. The span at 13 to 27 (GKAGPGDTPAGAAAP) shows a compositional bias: low complexity. A helical transmembrane segment spans residues 80–112 (LRIRLFNFSLKLLTCLLYIVRVLLDNPDQGIGC). Residues 113-139 (WGCTKYNYTFNGSSSEFHWAPILWVER) lie on the Extracellular side of the membrane. N-linked (GlcNAc...) asparagine glycans are attached at residues Asn-119 and Asn-123. Residues 140–164 (KMALWVIQVIVATISFLETMLIIYL) traverse the membrane as a helical segment. Topologically, residues 165-178 (SYKGNIWEQIFHVS) are cytoplasmic. A helical transmembrane segment spans residues 179-194 (FVLEMINTLPFIITVF). Residues 195-201 (WPPLRNL) lie on the Extracellular side of the membrane. A helical transmembrane segment spans residues 202–219 (FIPVFLNCWLAKHALENM). Over 220 to 232 (INDFHRAILRTQS) the chain is Cytoplasmic. Residues 233-260 (AMFNQVLILFCTLLCLVFTGTCGIQHLE) traverse the membrane as a helical segment. Over 261-267 (RAGGNLN) the chain is Extracellular. The segment at residues 268-288 (LLTSFYFCIVTFSTVGFGDVT) is an intramembrane region (pore-forming). Val-282 and Gly-283 together coordinate K(+). Residues 289 to 290 (PK) are Extracellular-facing. A helical transmembrane segment spans residues 291-324 (IWPSQLLVVILICVTLVVLPLQFEELVYLWMERQ). Over 325–1224 (KSGGNYSRHR…NPETRDETQL (900 aa)) the chain is Cytoplasmic. An RCK N-terminal 1 domain is found at 338–474 (EKHVVLCVSS…FHVKFADHVV (137 aa)). Na(+) contacts are provided by Leu-499, His-502, Ser-524, and Asn-526. The interval 644-675 (QNTDCRPSQGGSGGDGTKLTLPTENGSGSRRP) is disordered. A compositionally biased stretch (polar residues) spans 663–673 (TLPTENGSGSR). Positions 744 and 745 each coordinate Zn(2+). Residues Arg-747 and Lys-750 each coordinate K(+). The Na(+) site is built by Arg-747 and Lys-750. Residues Cys-752 and His-754 each contribute to the Zn(2+) site. K(+) contacts are provided by Asn-755, Tyr-757, Tyr-763, and Gly-764. Na(+) is bound at residue Tyr-757. A Na(+)-binding site is contributed by Phe-765. Residues 767-907 (NKLIIVSAET…QFRAKDSYSL (141 aa)) form the RCK N-terminal 2 domain. The K(+) site is built by Ser-773, Leu-804, Asp-806, Gly-828, and Asp-851. Disordered stretches follow at residues 1038-1066 (REAK…ADPV) and 1198-1224 (SSSQ…ETQL). Composition is skewed to low complexity over residues 1045 to 1055 (GTRAASGSGST) and 1198 to 1215 (SSSQ…SSCN).

The protein belongs to the potassium channel family. Calcium-activated (TC 1.A.1.3) subfamily. KCa4.1/KCNT1 sub-subfamily. Homotetramer; which constitutes the Na(+)-activated K(+) channel. Interacts with KCNT2; these heterodimer channels differ from the homomers in their unitary conductance, kinetic behavior, subcellular localization, and response to activation of protein kinase C. Interacts (via C-terminus) with FMR1; this interaction alters gating properties of KCNT1. Interacts with CRBN via its cytoplasmic C-terminus. Post-translationally, phosphorylated by protein kinase C. Phosphorylation of the C-terminal domain increases channel activity. As to expression, enriched in the brainstem and olfactory bulb and detected at significant levels in four different brain regions.

Its subcellular location is the cell membrane. The enzyme catalyses K(+)(in) = K(+)(out). Activated by high intracellular Na(+). In addition to activation by Na(+), is cooperatively activated by intracellular Cl(-) levels. Inhibited by Zn(2+). Activated upon stimulation of G-protein coupled receptors, such as CHRM1 and GRIA1. Sodium-activated K(+) channel. Acts as an important mediator of neuronal membrane excitability. Contributes to the delayed outward currents. Regulates neuronal bursting in sensory neurons. Contributes to synaptic development and plasticity. The protein is Potassium channel subfamily T member 1 (Kcnt1) of Mus musculus (Mouse).